The sequence spans 86 residues: Large ribosomal subunit protein bL27 (86 aa).

Residues 1–10 (MAQKKGGGST) are compositionally biased toward gly residues. Residues 1–20 (MAQKKGGGSTRNGRDSESKR) are disordered.

This sequence belongs to the bacterial ribosomal protein bL27 family.

In Bordetella avium (strain 197N), this protein is Large ribosomal subunit protein bL27.